The chain runs to 543 residues: Chaperonin GroEL (543 aa).

ATP-binding positions include 29-32 (TLGP), Lys50, 86-90 (DGTTT), Gly415, and Asp495.

This sequence belongs to the chaperonin (HSP60) family. In terms of assembly, forms a cylinder of 14 subunits composed of two heptameric rings stacked back-to-back. Interacts with the co-chaperonin GroES.

Its subcellular location is the cytoplasm. It catalyses the reaction ATP + H2O + a folded polypeptide = ADP + phosphate + an unfolded polypeptide.. In terms of biological role, together with its co-chaperonin GroES, plays an essential role in assisting protein folding. The GroEL-GroES system forms a nano-cage that allows encapsulation of the non-native substrate proteins and provides a physical environment optimized to promote and accelerate protein folding. This Karelsulcia muelleri (strain GWSS) (Sulcia muelleri) protein is Chaperonin GroEL.